The sequence spans 136 residues: Large ribosomal subunit protein uL16 (136 aa).

The protein belongs to the universal ribosomal protein uL16 family. Part of the 50S ribosomal subunit.

Binds 23S rRNA and is also seen to make contacts with the A and possibly P site tRNAs. This Orientia tsutsugamushi (strain Ikeda) (Rickettsia tsutsugamushi) protein is Large ribosomal subunit protein uL16.